A 69-amino-acid polypeptide reads, in one-letter code: MGMRMMFVVFLLVVLASTVVSSTSGRRAFHGRNAAAKASGLVSLTDRRPECCSDPRCNSSHPELCGGRR.

The signal sequence occupies residues 1–21; sequence MGMRMMFVVFLLVVLASTVVS. Residues 22–49 constitute a propeptide that is removed on maturation; the sequence is STSGRRAFHGRNAAAKASGLVSLTDRRP. Disulfide bonds link C51–C57 and C52–C65. Residues 53–55 are ser-Xaa-Pro motif, crucial for potent interaction with nAChR; it reads SDP. A Glycine amide modification is found at G66.

This sequence belongs to the conotoxin A superfamily. As to expression, expressed by the venom duct.

It localises to the secreted. In terms of biological role, alpha-conotoxins act on postsynaptic membranes, they bind to the nicotinic acetylcholine receptors (nAChR) and thus inhibit them. In Conus textile (Cloth-of-gold cone), this protein is Alpha-conotoxin-like Tx1.